Reading from the N-terminus, the 280-residue chain is Undecaprenyl-diphosphatase (280 aa).

The next 8 helical transmembrane spans lie at 1–21 (MTIL…FLPV), 41–61 (FVRA…LVLY), 87–107 (FDLY…GFLF), 115–135 (LGSV…MLFV), 147–167 (ITYP…FLPG), 186–206 (KAAA…ATLL), 226–246 (VLLV…KFFI), and 260–280 (YRIL…SLAV).

This sequence belongs to the UppP family.

The protein localises to the cell inner membrane. It catalyses the reaction di-trans,octa-cis-undecaprenyl diphosphate + H2O = di-trans,octa-cis-undecaprenyl phosphate + phosphate + H(+). Its function is as follows. Catalyzes the dephosphorylation of undecaprenyl diphosphate (UPP). Confers resistance to bacitracin. This chain is Undecaprenyl-diphosphatase, found in Porphyromonas gingivalis (strain ATCC BAA-308 / W83).